The following is a 233-amino-acid chain: Orotidine 5'-phosphate decarboxylase (233 aa).

Substrate is bound by residues Asp13, Lys35, 62-71, Thr122, Arg182, Gln191, Gly211, and Arg212; that span reads DLKFHDIPNT. Catalysis depends on Lys64, which acts as the Proton donor.

The protein belongs to the OMP decarboxylase family. Type 1 subfamily. Homodimer.

It carries out the reaction orotidine 5'-phosphate + H(+) = UMP + CO2. It participates in pyrimidine metabolism; UMP biosynthesis via de novo pathway; UMP from orotate: step 2/2. Functionally, catalyzes the decarboxylation of orotidine 5'-monophosphate (OMP) to uridine 5'-monophosphate (UMP). This chain is Orotidine 5'-phosphate decarboxylase, found in Pseudomonas putida (strain ATCC 700007 / DSM 6899 / JCM 31910 / BCRC 17059 / LMG 24140 / F1).